A 252-amino-acid polypeptide reads, in one-letter code: MSDWNPSLYLHFAAERSRPAVELLARVPLENVEYVADLGCGPGNSTALLQQRWPAARITGIDSSPAMVAEARSALPDCLFVEADIRNWQPEQALDLIFANASLQWLPDHYELFPHLVSLLSPLGVLAVQMPDNWLEPTHVLMREVAWEQNYPDRGREPLAGVHAYYDILSEAGCEVDIWRTTYYHQMPSHQAIINWVTATGLRPWLQDLTESEQQHFLTRYHQMLEEQYPLQENGQILLAFPRLFIVARRTE.

It belongs to the methyltransferase superfamily. Tam family.

Its subcellular location is the cytoplasm. The catalysed reaction is trans-aconitate + S-adenosyl-L-methionine = (E)-3-(methoxycarbonyl)pent-2-enedioate + S-adenosyl-L-homocysteine. In terms of biological role, catalyzes the S-adenosylmethionine monomethyl esterification of trans-aconitate. The polypeptide is Trans-aconitate 2-methyltransferase (Escherichia coli O17:K52:H18 (strain UMN026 / ExPEC)).